A 373-amino-acid polypeptide reads, in one-letter code: RNA cytidine acetyltransferase (373 aa).

Residue Arg53 coordinates ATP. Residues 216-218 and 223-229 each bind acetyl-CoA; these read IAT and TGMGYGS. Residues 246–271 are disordered; that stretch reads GEFEEENEAAKPADEESDDESNLLKE. Position 313 (Arg313) interacts with acetyl-CoA.

The protein belongs to the RNA cytidine acetyltransferase family. NAT10 subfamily.

The protein resides in the nucleus. The protein localises to the nucleolus. The catalysed reaction is a cytidine in 18S rRNA + acetyl-CoA + ATP + H2O = an N(4)-acetylcytidine in 18S rRNA + ADP + phosphate + CoA + H(+). It catalyses the reaction a cytidine in tRNA + acetyl-CoA + ATP + H2O = an N(4)-acetylcytidine in tRNA + ADP + phosphate + CoA + H(+). Its function is as follows. RNA cytidine acetyltransferase with specificity toward both 18S rRNA and tRNAs. Catalyzes the formation of N(4)-acetylcytidine (ac4C) in 18S rRNA. Required for early nucleolar cleavages of precursor rRNA at sites A0, A1 and A2 during 18S rRNA synthesis. Catalyzes the formation of ac4C in serine and leucine tRNAs. Requires a tRNA-binding adapter protein for full tRNA acetyltransferase activity but not for 18S rRNA acetylation. The protein is RNA cytidine acetyltransferase of Achlya ambisexualis (Water mold).